The following is a 370-amino-acid chain: MDLLKSPLYSKYVESNAKLVNFAGWEMPISFSGLIKEHESVRSSAGLFDISHMGVISIKGINPKDYIQKLFPTNLYSFSEGQGLYTVMLNDKGGIIDDLIIYDLGIQENDLSELLLIVNASRYEEDFQWIKNNLNMSEISITNFKKDKVLLALQGKNSFDLFEEWIESSISYIPTFGCEYKIFEHISPKEKIFFSKTGYTGENGLEILLSKKAAINLWDFSISKNVTPCGLGARDTLRLEAGMHLYGQDINEETSPYEAGLGWLVHLENNHEFFGRRFLEEQSRLGIQKKLVGLSIEGKAIGRKGCAVLKGEENIGTITSGSWSPTKQQAIAFAYINTTHALINNEVQISIRGKKFKGVITKRAFYKKNY.

This sequence belongs to the GcvT family. The glycine cleavage system is composed of four proteins: P, T, L and H.

The enzyme catalyses N(6)-[(R)-S(8)-aminomethyldihydrolipoyl]-L-lysyl-[protein] + (6S)-5,6,7,8-tetrahydrofolate = N(6)-[(R)-dihydrolipoyl]-L-lysyl-[protein] + (6R)-5,10-methylene-5,6,7,8-tetrahydrofolate + NH4(+). Its function is as follows. The glycine cleavage system catalyzes the degradation of glycine. The polypeptide is Aminomethyltransferase (Prochlorococcus marinus (strain MIT 9215)).